We begin with the raw amino-acid sequence, 253 residues long: 5'-nucleotidase SurE (253 aa).

Residues Asp-8, Asp-9, Ser-39, and Asn-92 each contribute to the a divalent metal cation site.

Belongs to the SurE nucleotidase family. Requires a divalent metal cation as cofactor.

Its subcellular location is the cytoplasm. It carries out the reaction a ribonucleoside 5'-phosphate + H2O = a ribonucleoside + phosphate. Its function is as follows. Nucleotidase that shows phosphatase activity on nucleoside 5'-monophosphates. In Burkholderia thailandensis (strain ATCC 700388 / DSM 13276 / CCUG 48851 / CIP 106301 / E264), this protein is 5'-nucleotidase SurE.